We begin with the raw amino-acid sequence, 276 residues long: Large ribosomal subunit protein uL2 (276 aa).

Disordered stretches follow at residues 1–20 (MGIK…TTND) and 219–276 (TVRG…RRKK). Positions 7 to 20 (NPTTNGRRNMTTND) are enriched in polar residues.

It belongs to the universal ribosomal protein uL2 family. As to quaternary structure, part of the 50S ribosomal subunit. Forms a bridge to the 30S subunit in the 70S ribosome.

In terms of biological role, one of the primary rRNA binding proteins. Required for association of the 30S and 50S subunits to form the 70S ribosome, for tRNA binding and peptide bond formation. It has been suggested to have peptidyltransferase activity; this is somewhat controversial. Makes several contacts with the 16S rRNA in the 70S ribosome. This is Large ribosomal subunit protein uL2 from Bacillus anthracis (strain A0248).